Here is a 477-residue protein sequence, read N- to C-terminus: Probable cytosolic Fe-S cluster assembly factor GL21135 (477 aa).

Residues C23, C69, C72, C75, C188, C244, C396, and C400 each coordinate [4Fe-4S] cluster.

This sequence belongs to the NARF family.

Functionally, component of the cytosolic iron-sulfur (Fe/S) protein assembly machinery. Required for maturation of extramitochondrial Fe/S proteins. The protein is Probable cytosolic Fe-S cluster assembly factor GL21135 of Drosophila persimilis (Fruit fly).